The chain runs to 242 residues: ADP-dependent L-serine kinase SerK (242 aa).

Glu-30 is an active-site residue. 4 residues coordinate ADP: Ser-43, Ile-49, Trp-51, and Lys-52. Val-68 provides a ligand contact to O-phospho-L-serine. ADP contacts are provided by Asp-69, Gly-70, His-71, His-72, and Arg-73. Asp-69 is a Mg(2+) binding site. Residues Gly-70, His-71, and His-72 each coordinate O-phospho-L-serine. The O-phospho-L-serine site is built by Trp-102, Lys-221, Thr-223, and His-225.

It belongs to the SerK family. The cofactor is Mg(2+).

It catalyses the reaction L-serine + ADP = O-phospho-L-serine + AMP + H(+). The protein operates within amino-acid biosynthesis; L-cysteine biosynthesis; L-cysteine from L-serine: step 1/2. Free serine kinase that uses ADP to phosphorylate L-serine to yield O-phospho-L-serine and AMP. The protein is ADP-dependent L-serine kinase SerK of Thermococcus kodakarensis (strain ATCC BAA-918 / JCM 12380 / KOD1) (Pyrococcus kodakaraensis (strain KOD1)).